A 327-amino-acid chain; its full sequence is DNA-directed RNA polymerase subunit alpha (327 aa).

Residues 1–233 (MQNSASEFLK…DQLSIFADLQ (233 aa)) are alpha N-terminal domain (alpha-NTD). Residues 247 to 327 (VDPILLRPVD…NWPPAGLEKP (81 aa)) are alpha C-terminal domain (alpha-CTD).

The protein belongs to the RNA polymerase alpha chain family. In terms of assembly, homodimer. The RNAP catalytic core consists of 2 alpha, 1 beta, 1 beta' and 1 omega subunit. When a sigma factor is associated with the core the holoenzyme is formed, which can initiate transcription.

The catalysed reaction is RNA(n) + a ribonucleoside 5'-triphosphate = RNA(n+1) + diphosphate. DNA-dependent RNA polymerase catalyzes the transcription of DNA into RNA using the four ribonucleoside triphosphates as substrates. The protein is DNA-directed RNA polymerase subunit alpha of Laribacter hongkongensis (strain HLHK9).